The primary structure comprises 300 residues: Cation-efflux pump FieF (300 aa).

4 helical membrane passes run 12–32, 39–59, 82–102, and 114–134; these read AAIA…FAWW, ILAA…NLLV, AALA…LTGI, and PGVG…LVSF. Zn(2+) contacts are provided by D45 and D49. Residues H153 and D157 each coordinate Zn(2+). A run of 2 helical transmembrane segments spans residues 156–176 and 178–198; these read SDVM…YGWH and ADAL…LRMG.

This sequence belongs to the cation diffusion facilitator (CDF) transporter (TC 2.A.4) family. FieF subfamily. Homodimer.

It is found in the cell inner membrane. It catalyses the reaction Zn(2+)(in) + H(+)(out) = Zn(2+)(out) + H(+)(in). It carries out the reaction Cd(2+)(in) + H(+)(out) = Cd(2+)(out) + H(+)(in). The enzyme catalyses Fe(2+)(in) + H(+)(out) = Fe(2+)(out) + H(+)(in). Its function is as follows. Divalent metal cation transporter which exports Zn(2+), Cd(2+) and possibly Fe(2+). May be involved in zinc and iron detoxification by efflux. The chain is Cation-efflux pump FieF from Shigella boydii serotype 18 (strain CDC 3083-94 / BS512).